Consider the following 328-residue polypeptide: MSTQGFLKPRSIEVEPVGAHHAKIVMEPFERGYGHTLGNALRRILLSSMTGYAPTEVQMTGVVHEYSTIAGVREDVVDILLNLKGVVFKLHNRDEVTLVLRKNGAGAVVASDIELPHDVEIINPDHLICNLTDAGKIEMQVKVEKGRGYVPGNVRALSEDRTHTIGRIVLDASFSPVRRVSYAVESARVEQRTDLDKLVLDIETNGVISPEEAVRQAARILMDQISVFAALEGAGDAYEPPVRGTPQIDPVLLRPVDDLELTVRSANCLKAENIYYIGDLIQRTENELLKTPNLGRKSLNEIKEVLAARGLTLGMKLENWPPLGLERP.

Residues methionine 1 to glutamate 232 are alpha N-terminal domain (alpha-NTD). An alpha C-terminal domain (alpha-CTD) region spans residues isoleucine 248–proline 328.

Belongs to the RNA polymerase alpha chain family. In terms of assembly, homodimer. The RNAP catalytic core consists of 2 alpha, 1 beta, 1 beta' and 1 omega subunit. When a sigma factor is associated with the core the holoenzyme is formed, which can initiate transcription.

It catalyses the reaction RNA(n) + a ribonucleoside 5'-triphosphate = RNA(n+1) + diphosphate. DNA-dependent RNA polymerase catalyzes the transcription of DNA into RNA using the four ribonucleoside triphosphates as substrates. The chain is DNA-directed RNA polymerase subunit alpha from Bordetella bronchiseptica (strain ATCC BAA-588 / NCTC 13252 / RB50) (Alcaligenes bronchisepticus).